Here is a 500-residue protein sequence, read N- to C-terminus: MTIFDNYEVWFVIGSQHLYGPEALRQVTKHAEHVVNSLNAEAKLPCKLVLKPLGTTPDEITHICRDANYDDKCAGLVVWLHTFSPAKMWINGLTILNKPLLQFHTQYNAALPWDSIDMDFMNLNQTAHGGREFGFIGARMRQQHSVVTGHWQDKEAHQRIGGWMRQAVSKQDTRHLKVCRFGDNMREVAVTDGDKVAAQIKFGFSVNTWAVGDLVQVVNSISDGDISALVDEYESSYRLTPAAQVHGEKRQNVLDAARIELGMKRFLEQGGFHAFTTTFEDLHGLKQLPGLAVQRLMQQGYGFAGEGDWKTAALLRIMKVMSTGLQGGTSFMEDYTYHFDNGNDLVLGSHMLEVCPTIATAEKPILDVQPLGIGGKADPARLIFNTQTGPAIVASLIDLGDRFRLLVNTIETVPTPHDLPKLPVANALWKAQPDLRTASEAWIIAGGAHHTVFSHALNLDDMRQFAELHNIELTVIDNDTRLPSFKDALRWNEVYYSSKR.

4 residues coordinate Mn(2+): E306, E333, H350, and H450.

Belongs to the arabinose isomerase family. In terms of assembly, homohexamer. The cofactor is Mn(2+).

It catalyses the reaction beta-L-arabinopyranose = L-ribulose. It functions in the pathway carbohydrate degradation; L-arabinose degradation via L-ribulose; D-xylulose 5-phosphate from L-arabinose (bacterial route): step 1/3. Its function is as follows. Catalyzes the conversion of L-arabinose to L-ribulose. The chain is L-arabinose isomerase from Klebsiella pneumoniae (strain 342).